The primary structure comprises 326 residues: DNA-directed RNA polymerase subunit alpha (326 aa).

An alpha N-terminal domain (alpha-NTD) region spans residues 1–231; sequence MQTNLLKPKI…DQLVVFAALE (231 aa). The tract at residues 247–326 is alpha C-terminal domain (alpha-CTD); that stretch reads VDPMLMRPVD…ESWPPANLEK (80 aa).

This sequence belongs to the RNA polymerase alpha chain family. As to quaternary structure, homodimer. The RNAP catalytic core consists of 2 alpha, 1 beta, 1 beta' and 1 omega subunit. When a sigma factor is associated with the core the holoenzyme is formed, which can initiate transcription.

The enzyme catalyses RNA(n) + a ribonucleoside 5'-triphosphate = RNA(n+1) + diphosphate. Its function is as follows. DNA-dependent RNA polymerase catalyzes the transcription of DNA into RNA using the four ribonucleoside triphosphates as substrates. The chain is DNA-directed RNA polymerase subunit alpha from Polynucleobacter necessarius subsp. necessarius (strain STIR1).